The primary structure comprises 194 residues: Probable chorismate pyruvate-lyase (194 aa).

Substrate-binding residues include Arg77, Leu115, and Glu176.

The protein belongs to the UbiC family.

The protein resides in the cytoplasm. It catalyses the reaction chorismate = 4-hydroxybenzoate + pyruvate. It participates in cofactor biosynthesis; ubiquinone biosynthesis. Functionally, removes the pyruvyl group from chorismate, with concomitant aromatization of the ring, to provide 4-hydroxybenzoate (4HB) for the ubiquinone pathway. The sequence is that of Probable chorismate pyruvate-lyase from Cupriavidus pinatubonensis (strain JMP 134 / LMG 1197) (Cupriavidus necator (strain JMP 134)).